The primary structure comprises 321 residues: tRNA U34 carboxymethyltransferase (321 aa).

Carboxy-S-adenosyl-L-methionine contacts are provided by residues lysine 90, tryptophan 104, lysine 109, glycine 129, 151-153 (DPT), 180-181 (IE), methionine 195, tyrosine 199, and arginine 314.

It belongs to the class I-like SAM-binding methyltransferase superfamily. CmoB family. Homotetramer.

The catalysed reaction is carboxy-S-adenosyl-L-methionine + 5-hydroxyuridine(34) in tRNA = 5-carboxymethoxyuridine(34) in tRNA + S-adenosyl-L-homocysteine + H(+). In terms of biological role, catalyzes carboxymethyl transfer from carboxy-S-adenosyl-L-methionine (Cx-SAM) to 5-hydroxyuridine (ho5U) to form 5-carboxymethoxyuridine (cmo5U) at position 34 in tRNAs. The polypeptide is tRNA U34 carboxymethyltransferase (Actinobacillus succinogenes (strain ATCC 55618 / DSM 22257 / CCUG 43843 / 130Z)).